The sequence spans 365 residues: tRNA (guanine(6)-N2)-methyltransferase (365 aa).

In terms of domain architecture, THUMP spans 69-182 (NENSRLLHRV…KDVFFLGIDT (114 aa)). S-adenosyl-L-methionine is bound by residues 198-202 (HPAHL), 228-230 (SGT), Glu248, 276-277 (DA), and Asn293.

It belongs to the methyltransferase superfamily. In terms of assembly, monomer in solution.

It localises to the cytoplasm. It catalyses the reaction guanosine(6) in tRNA + S-adenosyl-L-methionine = N(2)-methylguanosine(6) in tRNA + S-adenosyl-L-homocysteine + H(+). Functionally, S-adenosyl-L-methionine-dependent methyltransferase that catalyzes the methylation of the guanosine nucleotide at position 6 (m2G6) in tRNA(Phe). This is tRNA (guanine(6)-N2)-methyltransferase from Pyrococcus furiosus (strain ATCC 43587 / DSM 3638 / JCM 8422 / Vc1).